The sequence spans 125 residues: Phosphoribosyl-AMP cyclohydrolase (125 aa).

Residue Asp-74 participates in Mg(2+) binding. Cys-75 contributes to the Zn(2+) binding site. Positions 76 and 78 each coordinate Mg(2+). 2 residues coordinate Zn(2+): Cys-92 and Cys-99.

This sequence belongs to the PRA-CH family. Homodimer. Requires Mg(2+) as cofactor. The cofactor is Zn(2+).

It is found in the cytoplasm. The enzyme catalyses 1-(5-phospho-beta-D-ribosyl)-5'-AMP + H2O = 1-(5-phospho-beta-D-ribosyl)-5-[(5-phospho-beta-D-ribosylamino)methylideneamino]imidazole-4-carboxamide. It participates in amino-acid biosynthesis; L-histidine biosynthesis; L-histidine from 5-phospho-alpha-D-ribose 1-diphosphate: step 3/9. Catalyzes the hydrolysis of the adenine ring of phosphoribosyl-AMP. The polypeptide is Phosphoribosyl-AMP cyclohydrolase (Citrifermentans bemidjiense (strain ATCC BAA-1014 / DSM 16622 / JCM 12645 / Bem) (Geobacter bemidjiensis)).